The sequence spans 339 residues: Dihydroorotase (339 aa).

2 residues coordinate Zn(2+): His-12 and His-14. Residues 14–16 (HVR) and Asn-40 each bind substrate. Positions 94, 133, 167, and 239 each coordinate Zn(2+). Lys-94 carries the N6-carboxylysine modification. His-133 lines the substrate pocket. Asp-239 is an active-site residue. Substrate is bound by residues His-243 and Ala-255.

This sequence belongs to the metallo-dependent hydrolases superfamily. DHOase family. Class II DHOase subfamily. As to quaternary structure, homodimer. The cofactor is Zn(2+).

It catalyses the reaction (S)-dihydroorotate + H2O = N-carbamoyl-L-aspartate + H(+). It functions in the pathway pyrimidine metabolism; UMP biosynthesis via de novo pathway; (S)-dihydroorotate from bicarbonate: step 3/3. Catalyzes the reversible cyclization of carbamoyl aspartate to dihydroorotate. This is Dihydroorotase from Helicobacter pylori (strain HPAG1).